Reading from the N-terminus, the 621-residue chain is Kininogen-1 (621 aa).

The first 18 residues, 1 to 18, serve as a signal peptide directing secretion; sequence MKLITILFLCSRLLPSLT. Residues 27–131 form the Cystatin kininogen-type 1 domain; the sequence is CNDQDVFKAV…IQTCLITPAE (105 aa). 9 disulfide bridges follow: cysteine 27/cysteine 591, cysteine 82/cysteine 93, cysteine 106/cysteine 125, cysteine 141/cysteine 144, cysteine 205/cysteine 217, cysteine 228/cysteine 247, cysteine 263/cysteine 266, cysteine 327/cysteine 339, and cysteine 350/cysteine 369. Residues asparagine 47 and asparagine 87 are each glycosylated (N-linked (GlcNAc...) asparagine). O-linked (GalNAc...) threonine; partial glycosylation is present at threonine 136. Residues 150 to 253 enclose the Cystatin kininogen-type 2 domain; it reads TKSPDLEPVL…SQKCDLYPVK (104 aa). 2 N-linked (GlcNAc...) asparagine glycosylation sites follow: asparagine 168 and asparagine 169. Asparagine 197 is a glycosylation site (N-linked (GlcNAc...) asparagine; partial). The N-linked (GlcNAc...) asparagine glycan is linked to asparagine 204. One can recognise a Cystatin kininogen-type 3 domain in the interval 272–375; sequence VDSPDLEEPL…TVNCQPLGQT (104 aa). Serine 331 carries the post-translational modification Phosphoserine. The tract at residues 396 to 497 is disordered; it reads EGSTTVSLPH…GKNNGKHYDW (102 aa). Serine 398 carries O-linked (GalNAc...) serine glycosylation. Residues threonine 399 and threonine 400 are each glycosylated (O-linked (GalNAc...) threonine). O-linked (GalNAc...) serine glycosylation is present at serine 406. Residues 444–492 show a composition bias toward basic residues; it reads GHKHKHDQGHGHHGSHGLGHGHQKQHGLGHGHKHGHGHGKHKNKGKNNG. Serine 512 carries an O-linked (GalNAc...) serine glycan. O-linked (GalNAc...) threonine glycosylation is found at threonine 520, threonine 524, threonine 536, threonine 548, threonine 553, and threonine 570. O-linked (GalNAc...) serine glycosylation occurs at serine 581.

In terms of processing, bradykinin is released from kininogen by plasma kallikrein. Post-translationally, phosphorylated by FAM20C in the extracellular medium. Bradykinin is inactivated by ACE, which removes the dipeptide Arg-Phe from its C-terminus. Plasma.

The protein localises to the secreted. Its subcellular location is the extracellular space. In terms of biological role, kininogens are inhibitors of thiol proteases. HMW-kininogen plays an important role in blood coagulation by helping to position optimally prekallikrein and factor XI next to factor XII; HMW-kininogen inhibits the thrombin- and plasmin-induced aggregation of thrombocytes. LMW-kininogen inhibits the aggregation of thrombocytes. LMW-kininogen is in contrast to HMW-kininogen not involved in blood clotting. Functionally, the active peptide bradykinin is a potent vasodilatator that is released from HMW-kininogen shows a variety of physiological effects: (A) influence in smooth muscle contraction, (B) induction of hypotension, (C) natriuresis and diuresis, (D) decrease in blood glucose level, (E) it is a mediator of inflammation and causes (E1) increase in vascular permeability, (E2) stimulation of nociceptors (4E3) release of other mediators of inflammation (e.g. prostaglandins), (F) it has a cardioprotective effect (directly via bradykinin action, indirectly via endothelium-derived relaxing factor action). The chain is Kininogen-1 (KNG1) from Bos taurus (Bovine).